The chain runs to 257 residues: 5'-nucleotidase SurE (257 aa).

A divalent metal cation-binding residues include Asp-9, Asp-10, Ser-40, and Asn-92.

Belongs to the SurE nucleotidase family. The cofactor is a divalent metal cation.

Its subcellular location is the cytoplasm. It catalyses the reaction a ribonucleoside 5'-phosphate + H2O = a ribonucleoside + phosphate. In terms of biological role, nucleotidase that shows phosphatase activity on nucleoside 5'-monophosphates. This Alkalilimnicola ehrlichii (strain ATCC BAA-1101 / DSM 17681 / MLHE-1) protein is 5'-nucleotidase SurE.